The primary structure comprises 474 residues: 3-isopropylmalate dehydratase large subunit (474 aa).

Cysteine 353, cysteine 414, and cysteine 417 together coordinate [4Fe-4S] cluster.

The protein belongs to the aconitase/IPM isomerase family. LeuC type 1 subfamily. Heterodimer of LeuC and LeuD. [4Fe-4S] cluster is required as a cofactor.

The catalysed reaction is (2R,3S)-3-isopropylmalate = (2S)-2-isopropylmalate. It participates in amino-acid biosynthesis; L-leucine biosynthesis; L-leucine from 3-methyl-2-oxobutanoate: step 2/4. Functionally, catalyzes the isomerization between 2-isopropylmalate and 3-isopropylmalate, via the formation of 2-isopropylmaleate. This is 3-isopropylmalate dehydratase large subunit from Teredinibacter turnerae (strain ATCC 39867 / T7901).